A 484-amino-acid chain; its full sequence is NADH-ubiquinone oxidoreductase chain 4 (484 aa).

14 consecutive transmembrane segments (helical) span residues 1 to 21 (MLTL…PMQG), 33 to 53 (LALG…GEFD), 77 to 97 (VDGI…ICIL), 109 to 129 (YFLM…VVLD), 130 to 150 (ILLF…IVGI), 162 to 182 (FLLF…FLVI), 206 to 226 (LLWL…PFHV), 236 to 256 (PLAG…YGYM), 270 to 290 (FSPL…LATL), 295 to 315 (FKAL…LGLF), 326 to 346 (LLLS…VGGV), 365 to 385 (YMPL…AVPL), 405 to 425 (VFAV…IWLY), and 448 to 468 (FMLL…PNII).

This sequence belongs to the complex I subunit 4 family.

The protein localises to the mitochondrion inner membrane. It catalyses the reaction a ubiquinone + NADH + 5 H(+)(in) = a ubiquinol + NAD(+) + 4 H(+)(out). Core subunit of the mitochondrial membrane respiratory chain NADH dehydrogenase (Complex I) that is believed to belong to the minimal assembly required for catalysis. Complex I functions in the transfer of electrons from NADH to the respiratory chain. The immediate electron acceptor for the enzyme is believed to be ubiquinone. This is NADH-ubiquinone oxidoreductase chain 4 (ND4) from Mycosarcoma maydis (Corn smut fungus).